Reading from the N-terminus, the 190-residue chain is Movement protein (190 aa).

It belongs to the tombusvirus/aureusvirus movement protein p22 family.

It localises to the host membrane. In terms of biological role, transports viral genome to neighboring plant cells directly through plasmosdesmata, without any budding. The movement protein allows efficient cell to cell propagation, by bypassing the host cell wall barrier. The polypeptide is Movement protein (Cucumber necrosis virus (CNV)).